We begin with the raw amino-acid sequence, 565 residues long: Urocanate hydratase (565 aa).

NAD(+) contacts are provided by residues 61-62 (GG), Gln-139, 185-187 (GMG), Glu-205, Arg-210, 251-252 (NA), 272-276 (QTSAH), 282-283 (YL), and Tyr-331. Residue Cys-419 is part of the active site. The disordered stretch occupies residues 453–472 (LDSGSVASPNRETESMRDGS). Over residues 463-472 (RETESMRDGS) the composition is skewed to basic and acidic residues. Gly-501 contributes to the NAD(+) binding site.

The protein belongs to the urocanase family. It depends on NAD(+) as a cofactor.

It is found in the cytoplasm. It catalyses the reaction 4-imidazolone-5-propanoate = trans-urocanate + H2O. The protein operates within amino-acid degradation; L-histidine degradation into L-glutamate; N-formimidoyl-L-glutamate from L-histidine: step 2/3. Catalyzes the conversion of urocanate to 4-imidazolone-5-propionate. This Pseudomonas syringae pv. syringae (strain B728a) protein is Urocanate hydratase.